We begin with the raw amino-acid sequence, 319 residues long: Acetyl-coenzyme A carboxylase carboxyl transferase subunit alpha (319 aa).

The region spanning 35 to 296 (DLDKELEQLE…KATLLRQLAD (262 aa)) is the CoA carboxyltransferase C-terminal domain.

The protein belongs to the AccA family. As to quaternary structure, acetyl-CoA carboxylase is a heterohexamer composed of biotin carboxyl carrier protein (AccB), biotin carboxylase (AccC) and two subunits each of ACCase subunit alpha (AccA) and ACCase subunit beta (AccD).

The protein resides in the cytoplasm. The catalysed reaction is N(6)-carboxybiotinyl-L-lysyl-[protein] + acetyl-CoA = N(6)-biotinyl-L-lysyl-[protein] + malonyl-CoA. It participates in lipid metabolism; malonyl-CoA biosynthesis; malonyl-CoA from acetyl-CoA: step 1/1. In terms of biological role, component of the acetyl coenzyme A carboxylase (ACC) complex. First, biotin carboxylase catalyzes the carboxylation of biotin on its carrier protein (BCCP) and then the CO(2) group is transferred by the carboxyltransferase to acetyl-CoA to form malonyl-CoA. The sequence is that of Acetyl-coenzyme A carboxylase carboxyl transferase subunit alpha from Vibrio cholerae serotype O1 (strain ATCC 39541 / Classical Ogawa 395 / O395).